The following is a 423-amino-acid chain: MSEDHGKDYTLEADSELRFEIEQKDAKVLVSLVSGFAELFGTELVKKKQYEFGMGAKVAIFTYQGCVLHVSGKMDVCYISKETPMVQYVNCHAALEQFRMEAEEKDRHGPVAMVVGPMDVGKSTLCRILLNYAVRVGRRPLYADLDVGQGSIAIAGSVATILIERPANVEEGFAKTAPLVYHFGHKSPSGNSILYNAVVSKMAEVTLHSLNSNKRTKSSGIIVNTCGWVKGSGYAHLLHAAKAYGACAIFVLDQERLYNELLRDVPKGVHVVLLPKSGGVVERSKELRHEARDQRIKEYFYGNARAPFYPFSFEVKFQDLRLYKIGAPPLPDSCMPIGMKAEDNKTKVVAVTPTPALIHHVLALSFAESVEDEVIGTNVAGFCCVTEVDMERQAVMLLSPQPRPLPPNALLLWSELQFMDNHT.

Residues Glu-16, Lys-57, and Asp-119–Thr-124 contribute to the ATP site.

It belongs to the Clp1 family. Clp1 subfamily.

The protein resides in the nucleus. In terms of biological role, required for endonucleolytic cleavage during polyadenylation-dependent pre-mRNA 3'-end formation. This Drosophila yakuba (Fruit fly) protein is Protein CLP1 homolog (cbc).